The chain runs to 519 residues: Dihydropyrimidinase (519 aa).

H67 and H69 together coordinate Zn(2+). Position 79 is a phosphoserine (S79). K159 lines the Zn(2+) pocket. K159 carries the post-translational modification N6-carboxylysine. Y164 serves as a coordination point for substrate. Zn(2+) is bound by residues H192 and H248. K256 carries the N6-succinyllysine modification. Residue D326 coordinates Zn(2+). Position 347 (N347) interacts with substrate. A Phosphothreonine modification is found at T510.

It belongs to the metallo-dependent hydrolases superfamily. Hydantoinase/dihydropyrimidinase family. In terms of assembly, homotetramer. The cofactor is Zn(2+). In terms of processing, carboxylation allows a single lysine to coordinate two zinc ions.

It carries out the reaction 5,6-dihydrouracil + H2O = 3-(carbamoylamino)propanoate + H(+). Catalyzes the second step of the reductive pyrimidine degradation, the reversible hydrolytic ring opening of dihydropyrimidines. Can catalyze the ring opening of 5,6-dihydrouracil to N-carbamyl-alanine and of 5,6-dihydrothymine to N-carbamyl-amino isobutyrate. In Rattus norvegicus (Rat), this protein is Dihydropyrimidinase (Dpys).